Here is a 112-residue protein sequence, read N- to C-terminus: uncharacterized protein (112 aa).

This is an uncharacterized protein from Acanthamoeba polyphaga mimivirus (APMV).